The chain runs to 284 residues: Lipoyl synthase (284 aa).

Positions 34, 39, 45, 60, 64, 67, and 272 each coordinate [4Fe-4S] cluster. One can recognise a Radical SAM core domain in the interval 46 to 261 (FARRTATFMI…EEIGYKLGFK (216 aa)).

It belongs to the radical SAM superfamily. Lipoyl synthase family. It depends on [4Fe-4S] cluster as a cofactor.

It is found in the cytoplasm. The enzyme catalyses [[Fe-S] cluster scaffold protein carrying a second [4Fe-4S](2+) cluster] + N(6)-octanoyl-L-lysyl-[protein] + 2 oxidized [2Fe-2S]-[ferredoxin] + 2 S-adenosyl-L-methionine + 4 H(+) = [[Fe-S] cluster scaffold protein] + N(6)-[(R)-dihydrolipoyl]-L-lysyl-[protein] + 4 Fe(3+) + 2 hydrogen sulfide + 2 5'-deoxyadenosine + 2 L-methionine + 2 reduced [2Fe-2S]-[ferredoxin]. It participates in protein modification; protein lipoylation via endogenous pathway; protein N(6)-(lipoyl)lysine from octanoyl-[acyl-carrier-protein]: step 2/2. Functionally, catalyzes the radical-mediated insertion of two sulfur atoms into the C-6 and C-8 positions of the octanoyl moiety bound to the lipoyl domains of lipoate-dependent enzymes, thereby converting the octanoylated domains into lipoylated derivatives. The sequence is that of Lipoyl synthase from Caldanaerobacter subterraneus subsp. tengcongensis (strain DSM 15242 / JCM 11007 / NBRC 100824 / MB4) (Thermoanaerobacter tengcongensis).